We begin with the raw amino-acid sequence, 212 residues long: LexA repressor (212 aa).

The segment at residues 29–49 is a DNA-binding region (H-T-H motif); that stretch reads VREIGEAVGLSSSSTIHGHIE. Active-site for autocatalytic cleavage activity residues include Ser-133 and Lys-171.

This sequence belongs to the peptidase S24 family. As to quaternary structure, homodimer.

The catalysed reaction is Hydrolysis of Ala-|-Gly bond in repressor LexA.. Represses a number of genes involved in the response to DNA damage (SOS response), including recA and lexA. In the presence of single-stranded DNA, RecA interacts with LexA causing an autocatalytic cleavage which disrupts the DNA-binding part of LexA, leading to derepression of the SOS regulon and eventually DNA repair. The chain is LexA repressor from Leuconostoc mesenteroides subsp. mesenteroides (strain ATCC 8293 / DSM 20343 / BCRC 11652 / CCM 1803 / JCM 6124 / NCDO 523 / NBRC 100496 / NCIMB 8023 / NCTC 12954 / NRRL B-1118 / 37Y).